An 86-amino-acid chain; its full sequence is Co-chaperonin GroES (86 aa).

Belongs to the GroES chaperonin family. As to quaternary structure, heptamer of 7 subunits arranged in a ring. Interacts with the chaperonin GroEL.

It localises to the cytoplasm. Functionally, together with the chaperonin GroEL, plays an essential role in assisting protein folding. The GroEL-GroES system forms a nano-cage that allows encapsulation of the non-native substrate proteins and provides a physical environment optimized to promote and accelerate protein folding. GroES binds to the apical surface of the GroEL ring, thereby capping the opening of the GroEL channel. This is Co-chaperonin GroES from Campylobacter curvus (strain 525.92).